A 300-amino-acid chain; its full sequence is Probable endonuclease 4 (300 aa).

Zn(2+) is bound by residues histidine 69, histidine 110, glutamate 145, aspartate 179, histidine 182, histidine 214, aspartate 227, histidine 229, and glutamate 259.

The protein belongs to the AP endonuclease 2 family. Zn(2+) is required as a cofactor.

The enzyme catalyses Endonucleolytic cleavage to 5'-phosphooligonucleotide end-products.. Its function is as follows. Endonuclease IV plays a role in DNA repair. It cleaves phosphodiester bonds at apurinic or apyrimidinic (AP) sites, generating a 3'-hydroxyl group and a 5'-terminal sugar phosphate. This is Probable endonuclease 4 from Lachnoclostridium phytofermentans (strain ATCC 700394 / DSM 18823 / ISDg) (Clostridium phytofermentans).